Consider the following 107-residue polypeptide: Large ribosomal subunit protein uL24 (107 aa).

It belongs to the universal ribosomal protein uL24 family. As to quaternary structure, part of the 50S ribosomal subunit.

Functionally, one of two assembly initiator proteins, it binds directly to the 5'-end of the 23S rRNA, where it nucleates assembly of the 50S subunit. Its function is as follows. One of the proteins that surrounds the polypeptide exit tunnel on the outside of the subunit. The polypeptide is Large ribosomal subunit protein uL24 (Mesomycoplasma hyopneumoniae (strain 7448) (Mycoplasma hyopneumoniae)).